Reading from the N-terminus, the 361-residue chain is tRNA/tmRNA (uracil-C(5))-methyltransferase (361 aa).

The S-adenosyl-L-methionine site is built by Gln-183, Tyr-211, Asn-216, Glu-232, and Asp-294. The active-site Nucleophile is Cys-319. Glu-353 serves as the catalytic Proton acceptor.

Belongs to the class I-like SAM-binding methyltransferase superfamily. RNA M5U methyltransferase family. TrmA subfamily.

It catalyses the reaction uridine(54) in tRNA + S-adenosyl-L-methionine = 5-methyluridine(54) in tRNA + S-adenosyl-L-homocysteine + H(+). The enzyme catalyses uridine(341) in tmRNA + S-adenosyl-L-methionine = 5-methyluridine(341) in tmRNA + S-adenosyl-L-homocysteine + H(+). In terms of biological role, dual-specificity methyltransferase that catalyzes the formation of 5-methyluridine at position 54 (m5U54) in all tRNAs, and that of position 341 (m5U341) in tmRNA (transfer-mRNA). The sequence is that of tRNA/tmRNA (uracil-C(5))-methyltransferase from Acinetobacter baumannii (strain ACICU).